The chain runs to 541 residues: FIVLISATAHFIFRRREPTAFQYACFQAGLALLLSVLLREPFGAVVLILLALNFLLGVQIALYRLFWHDLRVFPGPRLAAITQGWILREAYLGRSRFSMKEVGETYGDWVRIGPNELCTTSIEALSTIMGPKGWPKGPSYDSGITKGDSGGDSVLTIKNLPEHATRRRIWNKAFTPNAINGYLPSIEIRLEEMLSVIDTEIKKGESVDLCLQLGCFVYDTMCDMAFGALAGSAFSKTQEDKYRILTHMGRVVRQVGIVRNMPWLTPIVKAWPSSHRREQNEFKEFTKSMFLRRKNQGLGKQLDVFHYLLGEDTETGTRLTEAELAADSTLLVITGADTTRTVLLAFFLYLLKHPNYMEQLQAELLAAPDLSPPSLSRLEYLNACLQETMRLQPPSPANLQRICPPGGAVICGRQIPEGTKVRFSNYAIHRDERYFSRAEEFRPQRWLQKAKDDLGNQGEEKERLDQRAFFGFLIGPGACVAKNLAWMEMRLVVATILTNFDLSFAPGFDPVAFESSWTDAYLLLIEEPFEVMFTPKSQRMR.

A heme-binding site is contributed by cysteine 479.

Belongs to the cytochrome P450 family. The cofactor is heme.

This is Cytochrome P450 67 (CYP67) from Uromyces fabae (Rust fungus).